Consider the following 423-residue polypeptide: Peroxisomal membrane protein PMP47A (423 aa).

Solcar repeat units lie at residues 6–120, 142–230, and 239–373; these read YDDL…TGKT, LSVW…LKSF, and ITPV…LLIL. A helical transmembrane segment spans residues 12–32; the sequence is AFAGAGGGLLSMTLTYPLVTL. The segment covering 43–53 has biased composition (basic and acidic residues); that stretch reads KKDQEKEKENS. The tract at residues 43–70 is disordered; it reads KKDQEKEKENSNEDGSLSPKSSNTSDVS. A compositionally biased stretch (polar residues) spans 55-70; it reads EDGSLSPKSSNTSDVS. Transmembrane regions (helical) follow at residues 98-118, 148-168, 204-224, and 245-265; these read SALF…ELTG, MAAG…IWVA, FTGI…YTIF, and LLLG…YITL. The segment at 278–308 is disordered; it reads SEDVEKERTDSVQSLPEDGSDEDNLKENSAK. The chain crosses the membrane as a helical span at residues 353-373; it reads LLQSILNAAFLFYFKEELLIL.

It belongs to the mitochondrial carrier (TC 2.A.29) family.

The protein localises to the peroxisome membrane. May have transport activity. The protein is Peroxisomal membrane protein PMP47A (PMP47A) of Candida boidinii (Yeast).